We begin with the raw amino-acid sequence, 66 residues long: Large ribosomal subunit protein bL31 (66 aa).

4 residues coordinate Zn(2+): Cys-16, Cys-18, Cys-36, and Cys-39.

It belongs to the bacterial ribosomal protein bL31 family. Type A subfamily. Part of the 50S ribosomal subunit. Zn(2+) serves as cofactor.

Its function is as follows. Binds the 23S rRNA. This is Large ribosomal subunit protein bL31 from Geobacillus thermodenitrificans (strain NG80-2).